The sequence spans 608 residues: Protein trichome birefringence (608 aa).

The helical; Signal-anchor for type II membrane protein transmembrane segment at T38 to P58 threads the bilayer. Composition is skewed to polar residues over residues S101 to A137 and A145 to A203. A disordered region spans residues S101–D236. The segment covering T215 to T227 has biased composition (low complexity). The short motif at G328–S330 is the GDS motif element. The DCXHWCLPGXXDXWN motif motif lies at D573–N587.

Belongs to the PC-esterase family. TBL subfamily. Expressed in leaf vasculature, growing part of the root, expanding inflorescence stems and trichomes.

The protein localises to the membrane. In terms of biological role, required during cellulose deposition. May act as a bridging protein that binds pectin and other cell wall polysaccharides. Probably involved in maintaining esterification of pectins. May be involved in the specific O-acetylation of cell wall polymers. The polypeptide is Protein trichome birefringence (TBR) (Arabidopsis thaliana (Mouse-ear cress)).